A 933-amino-acid polypeptide reads, in one-letter code: Protein translocase subunit SecA (933 aa).

Residues Q87, 105–109 (GEGKT), and D515 each bind ATP. Residues C917, C919, C928, and H929 each contribute to the Zn(2+) site.

This sequence belongs to the SecA family. In terms of assembly, monomer and homodimer. Part of the essential Sec protein translocation apparatus which comprises SecA, SecYEG and auxiliary proteins SecDF-YajC and YidC. Zn(2+) is required as a cofactor.

The protein localises to the cell inner membrane. It is found in the cytoplasm. It catalyses the reaction ATP + H2O + cellular proteinSide 1 = ADP + phosphate + cellular proteinSide 2.. In terms of biological role, part of the Sec protein translocase complex. Interacts with the SecYEG preprotein conducting channel. Has a central role in coupling the hydrolysis of ATP to the transfer of proteins into and across the cell membrane, serving both as a receptor for the preprotein-SecB complex and as an ATP-driven molecular motor driving the stepwise translocation of polypeptide chains across the membrane. This Burkholderia cenocepacia (strain ATCC BAA-245 / DSM 16553 / LMG 16656 / NCTC 13227 / J2315 / CF5610) (Burkholderia cepacia (strain J2315)) protein is Protein translocase subunit SecA.